The following is a 256-amino-acid chain: NAD-dependent protein deacetylase (256 aa).

The Deacetylase sirtuin-type domain occupies 1–254; it reads MDISYHEKIS…KDILDVIKSE (254 aa). NAD(+) is bound by residues A28, T32, F39, R40, Q105, I107, D108, and H123. F39 serves as a coordination point for nicotinamide. Nicotinamide contacts are provided by I107 and D108. Catalysis depends on H123, which acts as the Proton acceptor. Residues C131, C134, C156, and C159 each contribute to the Zn(2+) site. T197, S198, and N222 together coordinate NAD(+).

It belongs to the sirtuin family. Class U subfamily. The cofactor is Zn(2+).

The protein localises to the cytoplasm. It carries out the reaction N(6)-acetyl-L-lysyl-[protein] + NAD(+) + H2O = 2''-O-acetyl-ADP-D-ribose + nicotinamide + L-lysyl-[protein]. In terms of biological role, NAD-dependent protein deacetylase which modulates the activities of several enzymes which are inactive in their acetylated form. This Thermodesulfovibrio yellowstonii (strain ATCC 51303 / DSM 11347 / YP87) protein is NAD-dependent protein deacetylase.